Here is a 367-residue protein sequence, read N- to C-terminus: Transcription factor aptf-2 (367 aa).

The interval 29–49 (VPATKETGPSSSAECSTQPAV) is disordered. Polar residues predominate over residues 36-47 (GPSSSAECSTQP). An H-S-H (helix-span-helix), dimerization region spans residues 220 to 354 (AKQKAFPNKV…GVASELRRLT (135 aa)).

Belongs to the AP-2 family. Binds DNA as a dimer.

It is found in the nucleus. Its subcellular location is the cytoplasm. Its function is as follows. Sequence-specific DNA-binding protein that interacts with enhancer elements to regulate transcription of selected genes. Required for neuroblast and epidermal morphogenesis, perhaps acting in cooperation with transcription factor aptf-4. In Caenorhabditis elegans, this protein is Transcription factor aptf-2.